We begin with the raw amino-acid sequence, 398 residues long: Acetate kinase 1 (398 aa).

A Mg(2+)-binding site is contributed by Asn9. Lys16 is a binding site for ATP. Arg89 provides a ligand contact to substrate. Residue Asp146 is the Proton donor/acceptor of the active site. ATP contacts are provided by residues 206 to 210, 281 to 283, and 329 to 333; these read HLGNG, DCR, and GIGEN. Glu384 serves as a coordination point for Mg(2+).

This sequence belongs to the acetokinase family. In terms of assembly, homodimer. Mg(2+) is required as a cofactor. Requires Mn(2+) as cofactor.

Its subcellular location is the cytoplasm. It carries out the reaction acetate + ATP = acetyl phosphate + ADP. Its pathway is metabolic intermediate biosynthesis; acetyl-CoA biosynthesis; acetyl-CoA from acetate: step 1/2. Its function is as follows. Catalyzes the formation of acetyl phosphate from acetate and ATP. Can also catalyze the reverse reaction. The protein is Acetate kinase 1 of Aliivibrio fischeri (strain ATCC 700601 / ES114) (Vibrio fischeri).